The primary structure comprises 270 residues: Hemin import ATP-binding protein HmuV (270 aa).

An ABC transporter domain is found at 2-238 (LTVENIEVTL…VTLSQAYGCT (237 aa)). 34–41 (GHNGSGKT) contributes to the ATP binding site.

Belongs to the ABC transporter superfamily. Heme (hemin) importer (TC 3.A.1.14.5) family. The complex is composed of two ATP-binding proteins (HmuV), two transmembrane proteins (HmuU) and a solute-binding protein (HmuT).

Its subcellular location is the cell inner membrane. Functionally, part of the ABC transporter complex HmuTUV involved in hemin import. Responsible for energy coupling to the transport system. The polypeptide is Hemin import ATP-binding protein HmuV (Jannaschia sp. (strain CCS1)).